We begin with the raw amino-acid sequence, 157 residues long: Cyclic pyranopterin monophosphate synthase (157 aa).

Residues 74–76 (MCH) and 110–111 (ME) each bind substrate. D125 is an active-site residue.

The protein belongs to the MoaC family. As to quaternary structure, homohexamer; trimer of dimers.

It carries out the reaction (8S)-3',8-cyclo-7,8-dihydroguanosine 5'-triphosphate = cyclic pyranopterin phosphate + diphosphate. It functions in the pathway cofactor biosynthesis; molybdopterin biosynthesis. Catalyzes the conversion of (8S)-3',8-cyclo-7,8-dihydroguanosine 5'-triphosphate to cyclic pyranopterin monophosphate (cPMP). In Peptoclostridium acidaminophilum (Eubacterium acidaminophilum), this protein is Cyclic pyranopterin monophosphate synthase.